A 275-amino-acid chain; its full sequence is Formamidopyrimidine-DNA glycosylase (275 aa).

Pro-2 functions as the Schiff-base intermediate with DNA in the catalytic mechanism. Glu-3 functions as the Proton donor in the catalytic mechanism. Lys-59 functions as the Proton donor; for beta-elimination activity in the catalytic mechanism. His-93, Arg-112, and Arg-153 together coordinate DNA. The FPG-type zinc-finger motif lies at 238–272 (NVYDRVGKPCPRCQTAIERIVVAQRSTFFCPLCQV). Arg-262 (proton donor; for delta-elimination activity) is an active-site residue.

Belongs to the FPG family. Monomer. Zn(2+) serves as cofactor.

It catalyses the reaction Hydrolysis of DNA containing ring-opened 7-methylguanine residues, releasing 2,6-diamino-4-hydroxy-5-(N-methyl)formamidopyrimidine.. It carries out the reaction 2'-deoxyribonucleotide-(2'-deoxyribose 5'-phosphate)-2'-deoxyribonucleotide-DNA = a 3'-end 2'-deoxyribonucleotide-(2,3-dehydro-2,3-deoxyribose 5'-phosphate)-DNA + a 5'-end 5'-phospho-2'-deoxyribonucleoside-DNA + H(+). Functionally, involved in base excision repair of DNA damaged by oxidation or by mutagenic agents. Acts as a DNA glycosylase that recognizes and removes damaged bases. Has a preference for oxidized purines, such as 7,8-dihydro-8-oxoguanine (8-oxoG). Has AP (apurinic/apyrimidinic) lyase activity and introduces nicks in the DNA strand. Cleaves the DNA backbone by beta-delta elimination to generate a single-strand break at the site of the removed base with both 3'- and 5'-phosphates. The polypeptide is Formamidopyrimidine-DNA glycosylase (Chloroflexus aggregans (strain MD-66 / DSM 9485)).